A 241-amino-acid chain; its full sequence is Core protein D3 homolog (241 aa).

The protein belongs to the chordopoxvirinae D3 family.

It is found in the virion. Functionally, late protein which is part of a large complex required for early virion morphogenesis. This complex participates in the formation of virosomes and the incorporation of virosomal contents into nascent immature virions. The chain is Core protein D3 homolog from Oryctolagus cuniculus (Rabbit).